Here is a 187-residue protein sequence, read N- to C-terminus: Biogenesis of lysosome-related organelles complex 1 subunit 5 (187 aa).

The tract at residues Met-1–Leu-26 is disordered. Ser-2 bears the N-acetylserine mark. Positions Asn-154–Thr-186 form a coiled coil.

It belongs to the BLOC1S5 family. In terms of assembly, interacts with BLOC1S4, DTNBP1/BLOC1S7 and PI4K2A. Component of the biogenesis of lysosome-related organelles complex 1 (BLOC-1) composed of BLOC1S1, BLOC1S2, BLOC1S3, BLOC1S4, BLOC1S5, BLOC1S6, DTNBP1/BLOC1S7 and SNAPIN/BLOC1S8. Octamer composed of one copy each BLOC1S1, BLOC1S2, BLOC1S3, BLOC1S4, BLOC1S5, BLOC1S6, DTNBP1/BLOC1S7 and SNAPIN/BLOC1S8. The BLOC-1 complex associates with the AP-3 protein complex and membrane protein cargos. Interacts with BLOC1S6.

In terms of biological role, component of the BLOC-1 complex, a complex that is required for normal biogenesis of lysosome-related organelles (LRO), such as platelet dense granules and melanosomes. In concert with the AP-3 complex, the BLOC-1 complex is required to target membrane protein cargos into vesicles assembled at cell bodies for delivery into neurites and nerve terminals. The BLOC-1 complex, in association with SNARE proteins, is also proposed to be involved in neurite extension. Plays a role in intracellular vesicle trafficking. The protein is Biogenesis of lysosome-related organelles complex 1 subunit 5 of Homo sapiens (Human).